The sequence spans 238 residues: 2-C-methyl-D-erythritol 4-phosphate cytidylyltransferase (238 aa).

This sequence belongs to the IspD/TarI cytidylyltransferase family. IspD subfamily.

The enzyme catalyses 2-C-methyl-D-erythritol 4-phosphate + CTP + H(+) = 4-CDP-2-C-methyl-D-erythritol + diphosphate. Its pathway is isoprenoid biosynthesis; isopentenyl diphosphate biosynthesis via DXP pathway; isopentenyl diphosphate from 1-deoxy-D-xylulose 5-phosphate: step 2/6. Its function is as follows. Catalyzes the formation of 4-diphosphocytidyl-2-C-methyl-D-erythritol from CTP and 2-C-methyl-D-erythritol 4-phosphate (MEP). The polypeptide is 2-C-methyl-D-erythritol 4-phosphate cytidylyltransferase (Aliivibrio fischeri (strain ATCC 700601 / ES114) (Vibrio fischeri)).